A 725-amino-acid polypeptide reads, in one-letter code: ATP-dependent rRNA helicase SPB4 (725 aa).

The Q motif motif lies at 15–43 (WAKLNPPLSPWILDVINSMGFKNMTPVQA). One can recognise a Helicase ATP-binding domain in the interval 46-260 (IPRAVKNQDC…GLGLRNPVRI (215 aa)). ATP is bound at residue 59–66 (AVTGSGKT). The segment at 119-156 (ESEEETGDVEAHAPPFASSSRSPSPQTPDKPLFPLPML) is disordered. The span at 132-142 (PPFASSSRSPS) shows a compositional bias: low complexity. The segment covering 143–152 (PQTPDKPLFP) has biased composition (pro residues). Positions 207–210 (DEAD) match the DEAD box motif. A Helicase C-terminal domain is found at 295-458 (KTLQLIRLLL…YINAYLEEVD (164 aa)). Positions 591-725 (AQRADNQSSN…IGGGMFDDLE (135 aa)) are disordered. 2 stretches are compositionally biased toward basic and acidic residues: residues 603–646 (ARAE…KYEW) and 685–707 (EIGKEYKSLKREIKEEKSVKESS). The span at 709–725 (GGAGGGGIGGGMFDDLE) shows a compositional bias: gly residues.

The protein belongs to the DEAD box helicase family. DDX55/SPB4 subfamily. In terms of assembly, component of pre-60S ribosomal complexes.

It is found in the nucleus. Its subcellular location is the nucleolus. It carries out the reaction ATP + H2O = ADP + phosphate + H(+). Functionally, ATP-binding RNA helicase involved in the biogenesis of 60S ribosomal subunits. Binds 90S pre-ribosomal particles and dissociates from pre-60S ribosomal particles after processing of 27SB pre-rRNA. Required for the normal formation of 18S rRNA through the processing of pre-rRNAs at sites A0, A1 and A2, and the normal formation of 25S and 5.8S rRNAs through the processing of pre-rRNAs at sites C1 and C2. In Cryptococcus neoformans var. neoformans serotype D (strain JEC21 / ATCC MYA-565) (Filobasidiella neoformans), this protein is ATP-dependent rRNA helicase SPB4.